A 1994-amino-acid chain; its full sequence is Protein-methionine sulfoxide oxidase mical3a (1994 aa).

Positions 2–498 (GDGGVNAVGE…RHLLDTGETR (497 aa)) are monooxygenase domain. FAD-binding positions include cysteine 101, 101-129 (CGLR…SRNN), glutamate 120, arginine 122, arginine 127, asparagine 129, and aspartate 402. The Calponin-homology (CH) domain maps to 521–627 (IVRSSKLLNW…YLSQFYEMFK (107 aa)). The segment at 666–708 (ISRKRNPKDKKEKELDGLGKRRKTSQAGQSEDEELQRANRDDR) is disordered. Over residues 674–684 (DKKEKELDGLG) the composition is skewed to basic and acidic residues. In terms of domain architecture, LIM zinc-binding spans 772 to 834 (DVCFFCRKRV…KPHYCYRLSG (63 aa)). 6 disordered regions span residues 843-900 (PAAA…LKGT), 917-1064 (EELE…AEAR), 1176-1263 (SQPV…ELKK), 1281-1476 (LGLT…REEV), 1493-1555 (VEDT…SPEA), and 1598-1747 (KVAW…LRLR). Acidic residues-rich tracts occupy residues 917-926 (EELEEVPEET) and 951-961 (SDMEEEDEDAE). Over residues 975–987 (EAVELHAKLKGES) the composition is skewed to basic and acidic residues. Composition is skewed to acidic residues over residues 1001-1037 (GEMD…DPEA) and 1046-1060 (PGTE…SDAE). Residues 1200–1215 (PTGNPLSPICTQSQPC) are compositionally biased toward polar residues. Composition is skewed to basic and acidic residues over residues 1249-1263 (RTNE…ELKK) and 1287-1297 (ERSKTAVEKSI). 2 stretches are compositionally biased toward low complexity: residues 1299–1314 (KTPT…YTPE) and 1358–1368 (SSSSGLGLNGS). Over residues 1369 to 1389 (VTTSQTAASDSYNNSDSTMLT) the composition is skewed to polar residues. Residues 1437 to 1458 (PVSPPQPKQKPVTAPVPTPRTN) are compositionally biased toward pro residues. Over residues 1464–1476 (RVKEPNKPRREEV) the composition is skewed to basic and acidic residues. The span at 1616–1635 (AQKDSAVKALESKKQADTLP) shows a compositional bias: basic and acidic residues. Positions 1649–1660 (SSVTSSESSTGG) are enriched in low complexity. Positions 1661 to 1679 (KSKKRSSLFSPRKNKKEKK) are enriched in basic residues. Residues 1680–1693 (AKNERLSSTEETPP) show a composition bias toward basic and acidic residues. Over residues 1718–1729 (CPSTPSSSTTGD) the composition is skewed to low complexity. Residues 1730-1746 (SGKKKDSPLDRSSDLRL) show a composition bias toward basic and acidic residues. Coiled coils occupy residues 1796-1855 (EEEL…KALR) and 1894-1960 (QEKN…EQRD). One can recognise a bMERB domain in the interval 1816–1982 (KQEELKRLHR…EKEEDKDLEA (167 aa)).

It belongs to the Mical family. The cofactor is FAD.

It localises to the cytoplasm. The protein resides in the cytoskeleton. It is found in the nucleus. The enzyme catalyses L-methionyl-[F-actin] + NADPH + O2 + H(+) = L-methionyl-(R)-S-oxide-[F-actin] + NADP(+) + H2O. Its function is as follows. Monooxygenase that promotes depolymerization of F-actin by mediating oxidation of specific methionine residues on actin. Acts by modifying actin subunits through the addition of oxygen to form methionine-sulfoxide, leading to promote actin filament severing and prevent repolymerization. Involved in exocytic vesicles tethering and fusion: the monooxygenase activity is required for this process. In Danio rerio (Zebrafish), this protein is Protein-methionine sulfoxide oxidase mical3a (mical3a).